The following is a 209-amino-acid chain: Small ribosomal subunit protein uS5 (209 aa).

Residues 1 to 11 (MTQPNTQTTPN) are compositionally biased toward polar residues. The disordered stretch occupies residues 1 to 55 (MTQPNTQTTPNDVPAAAEGQQEQQQQQRRGGGRERRGGGRRGDRRGQERDSEWQE). The segment covering 18 to 28 (EGQQEQQQQQR) has biased composition (low complexity). Residues 31–55 (GGRERRGGGRRGDRRGQERDSEWQE) show a composition bias toward basic and acidic residues. One can recognise an S5 DRBM domain in the interval 53-116 (WQERVVQIRR…ADGKKHLVKV (64 aa)).

This sequence belongs to the universal ribosomal protein uS5 family. In terms of assembly, part of the 30S ribosomal subunit. Contacts proteins S4 and S8.

In terms of biological role, with S4 and S12 plays an important role in translational accuracy. Located at the back of the 30S subunit body where it stabilizes the conformation of the head with respect to the body. The protein is Small ribosomal subunit protein uS5 of Prochlorococcus marinus (strain MIT 9313).